A 515-amino-acid chain; its full sequence is Proline--tRNA ligase (515 aa).

Belongs to the class-II aminoacyl-tRNA synthetase family. ProS type 3 subfamily. Homodimer.

It is found in the cytoplasm. It carries out the reaction tRNA(Pro) + L-proline + ATP = L-prolyl-tRNA(Pro) + AMP + diphosphate. Catalyzes the attachment of proline to tRNA(Pro) in a two-step reaction: proline is first activated by ATP to form Pro-AMP and then transferred to the acceptor end of tRNA(Pro). This Novosphingobium aromaticivorans (strain ATCC 700278 / DSM 12444 / CCUG 56034 / CIP 105152 / NBRC 16084 / F199) protein is Proline--tRNA ligase.